Consider the following 387-residue polypeptide: Probable serine/threonine-protein kinase PBL18 (387 aa).

The disordered stretch occupies residues 1 to 37; sequence MGNCLDSSARVGNRESTFGGSSRISRKPNQSSRLSSL. A lipid anchor (N-myristoyl glycine) is attached at G2. C4 is lipidated: S-palmitoyl cysteine. A compositionally biased stretch (polar residues) spans 14–37; that stretch reads RESTFGGSSRISRKPNQSSRLSSL. T73 is subject to Phosphothreonine. Positions 84–365 constitute a Protein kinase domain; that stretch reads FKPNSMIGEG…ADVLSTLQQL (282 aa). Residues 90–98 and K122 each bind ATP; that span reads IGEGGFGCV. Y167 is modified (phosphotyrosine). Residue D215 is the Proton acceptor of the active site. The residue at position 219 (S219) is a Phosphoserine. Phosphothreonine occurs at positions 250 and 255. Y263 carries the phosphotyrosine modification. The interval 368 to 387 is disordered; the sequence is SSKKMGSTQNIVMSPSSHMS.

Belongs to the protein kinase superfamily. Ser/Thr protein kinase family.

The protein localises to the cell membrane. It catalyses the reaction L-seryl-[protein] + ATP = O-phospho-L-seryl-[protein] + ADP + H(+). The catalysed reaction is L-threonyl-[protein] + ATP = O-phospho-L-threonyl-[protein] + ADP + H(+). Functionally, may be involved in plant defense signaling. In Arabidopsis thaliana (Mouse-ear cress), this protein is Probable serine/threonine-protein kinase PBL18.